A 104-amino-acid polypeptide reads, in one-letter code: Complex III assembly factor LYRM7 (104 aa).

The protein belongs to the complex I LYR family. Interacts with UQCRFS1.

It is found in the mitochondrion matrix. Its function is as follows. Assembly factor required for Rieske Fe-S protein UQCRFS1 incorporation into the cytochrome b-c1 (CIII) complex. Functions as a chaperone, binding to this subunit within the mitochondrial matrix and stabilizing it prior to its translocation and insertion into the late CIII dimeric intermediate within the mitochondrial inner membrane. This is Complex III assembly factor LYRM7 (LYRM7) from Danio rerio (Zebrafish).